The sequence spans 546 residues: DNA ligase (546 aa).

Residue Glu244 coordinates ATP. Lys246 (N6-AMP-lysine intermediate) is an active-site residue. Residues Arg251, Arg266, Glu295, Phe334, Arg405, and Lys411 each coordinate ATP.

Belongs to the ATP-dependent DNA ligase family. The cofactor is Mg(2+).

The catalysed reaction is ATP + (deoxyribonucleotide)n-3'-hydroxyl + 5'-phospho-(deoxyribonucleotide)m = (deoxyribonucleotide)n+m + AMP + diphosphate.. Its function is as follows. DNA ligase that seals nicks in double-stranded DNA during DNA replication, DNA recombination and DNA repair. The protein is DNA ligase of Methanocorpusculum labreanum (strain ATCC 43576 / DSM 4855 / Z).